The primary structure comprises 198 residues: MNLLVFFVYLXVCVIGSHSIXGSQQLSTKKCGGAICAMACTYGFVLDKDGCPICKCRDAPCPLVKCLPCKYGYVIDDNGCQTCECKPLDCGLVCLIYCPYGNIPDERGCPTCFCRPRPCKELECEKKCRNNVLDEIGCPTCKCKECLEPKKVGPCRALIPRYFYDVWSGKCKKFYWGGCQANGNNFKRKSQCCKRCKS.

The signal sequence occupies residues 1 to 19 (MNLLVFFVYLXVCVIGSHS). Antistasin-like domains follow at residues 31–56 (CGGAICAMACTYGFVLDKDGCPICKC), 56–85 (CRDAPCPLVKCLPCKYGYVIDDNGCQTCEC), 85–114 (CKPLDCGLVCLIYCPYGNIPDERGCPTCFC), and 114–143 (CRPRPCKELECEKKCRNNVLDEIGCPTCKC). Positions 146–196 (CLEPKKVGPCRALIPRYFYDVWSGKCKKFYWGGCQANGNNFKRKSQCCKRC) constitute a BPTI/Kunitz inhibitor domain. Disulfide bonds link Cys146–Cys196, Cys155–Cys179, and Cys171–Cys192.

Nacreous layer of shell (at protein level).

It localises to the secreted. The chain is BPTI/Kunitz domain-containing protein 4 from Margaritifera margaritifera (Freshwater pearl mussel).